A 1275-amino-acid polypeptide reads, in one-letter code: O-antigen biosynthesis protein RfbC (1275 aa).

Functionally, involved in O-antigen biosynthesis. The sequence is that of O-antigen biosynthesis protein RfbC (rfbC) from Myxococcus xanthus.